The following is a 301-amino-acid chain: Putative S-adenosyl-L-methionine-dependent methyltransferase Mflv_5024 (301 aa).

S-adenosyl-L-methionine contacts are provided by residues Asp129 and 158-159 (DL).

It belongs to the UPF0677 family.

Its function is as follows. Exhibits S-adenosyl-L-methionine-dependent methyltransferase activity. In Mycolicibacterium gilvum (strain PYR-GCK) (Mycobacterium gilvum (strain PYR-GCK)), this protein is Putative S-adenosyl-L-methionine-dependent methyltransferase Mflv_5024.